Here is a 79-residue protein sequence, read N- to C-terminus: NADH-ubiquinone oxidoreductase chain 4 (79 aa).

2 helical membrane-spanning segments follow: residues 24 to 44 (SYTL…LANI) and 54 to 74 (LLIN…WFLL).

This sequence belongs to the complex I subunit 4 family.

The protein localises to the mitochondrion membrane. The catalysed reaction is a ubiquinone + NADH + 5 H(+)(in) = a ubiquinol + NAD(+) + 4 H(+)(out). Functionally, core subunit of the mitochondrial membrane respiratory chain NADH dehydrogenase (Complex I) that is believed to belong to the minimal assembly required for catalysis. Complex I functions in the transfer of electrons from NADH to the respiratory chain. The immediate electron acceptor for the enzyme is believed to be ubiquinone. The polypeptide is NADH-ubiquinone oxidoreductase chain 4 (ND4) (Simulium vittatum (Striped black fly)).